Reading from the N-terminus, the 352-residue chain is NAD-dependent protein deacetylase sirtuin-2 (352 aa).

Ser-16 is subject to Phosphoserine. The 282-residue stretch at 20–301 folds into the Deacetylase sirtuin-type domain; it reads RLLDELTLEG…LALAELLGWK (282 aa). Residues 48-52 and 58-60 contribute to the NAD(+) site; these read AGIST and DFR. The residue at position 63 (Ser-63) is a Phosphoserine. An NAD(+)-binding site is contributed by 130–133; sequence QNID. His-150 serves as the catalytic Proton acceptor. Zn(2+)-binding residues include Cys-158 and Cys-163. Ser-170 carries the phosphoserine modification. 2 residues coordinate Zn(2+): Cys-184 and Cys-187. Residues 225-226, 249-251, and Cys-287 each bind NAD(+); these read TS and NKE. Residues 314-352 form a disordered region; that stretch reads SIDAQSGAGVPNPSTSASPKKSPPPAKDEARTTEREKPQ. The span at 324 to 333 shows a compositional bias: low complexity; sequence PNPSTSASPK. Phosphoserine occurs at positions 331 and 335. The span at 339-352 shows a compositional bias: basic and acidic residues; that stretch reads AKDEARTTEREKPQ.

This sequence belongs to the sirtuin family. Class I subfamily. In terms of assembly, interacts with CDC20, FOXO3 and FZR1. Associates with microtubules in primary cortical mature neurons. Homotrimer. Interacts (via both phosphorylated, unphosphorylated, active or inactive forms) with HDAC6; the interaction is necessary for the complex to interact with alpha-tubulin, suggesting that these proteins belong to a large complex that deacetylates the cytoskeleton. Interacts with FOXO1; the interaction is disrupted upon serum-starvation or oxidative stress, leading to increased level of acetylated FOXO1 and induction of autophagy. Interacts with RELA; the interaction occurs in the cytoplasm and is increased in a TNF-alpha-dependent manner. Interacts with HOXA10; the interaction is direct. Interacts with YWHAB and YWHAG; the interactions occur in a AKT-dependent manner and increase SIRT2-dependent TP53 deacetylation. Interacts with MAPK1/ERK2 and MAPK3/ERK1; the interactions increase SIRT2 stability and deacetylation activity. Interacts (phosphorylated form) with KMT5A isoform 2; the interaction is direct, stimulates KMT5A-mediated methyltransferase activity on histone at 'Lys-20' (H4K20me1) and is increased in a H(2)O(2)-induced oxidative stress-dependent manner. Interacts with G6PD; the interaction is enhanced by H(2)O(2) treatment. Interacts with a G1/S-specific cyclin E-CDK2 complex. Interacts with AURKA, CDK5R1 (p35 form) and CDK5 and HIF1A. Interacts with the tRNA ligase SARS1; recruited to the VEGFA promoter via interaction with SARS1. Interacts with BEX4; negatively regulates alpha-tubulin deacetylation by SIRT2. Interacts with MORN3; the interaction enhances the ubiquitination of p53/TP53. Requires Zn(2+) as cofactor. In terms of processing, phosphorylated at phosphoserine and phosphothreonine. Phosphorylated at Ser-331 by a mitotic kinase CDK1/cyclin B at the G2/M transition; phosphorylation regulates the delay in cell-cycle progression. Phosphorylated at Ser-331 by a mitotic kinase G1/S-specific cyclin E/Cdk2 complex; phosphorylation inactivates SIRT2-mediated alpha-tubulin deacetylation and thereby negatively regulates cell adhesion, cell migration and neurite outgrowth during neuronal differentiation. Phosphorylated by cyclin A/Cdk2 and p35-Cdk5 complexes and to a lesser extent by the cyclin D3/Cdk4 and cyclin B/Cdk1, in vitro. Dephosphorylated at Ser-331 by CDC14A and CDC14B around early anaphase. Post-translationally, acetylated by EP300; acetylation leads both to the decreased of SIRT2-mediated alpha-tubulin deacetylase activity and SIRT2-mediated down-regulation of TP53 transcriptional activity. Ubiquitinated.

It is found in the nucleus. The protein localises to the cytoplasm. It localises to the perinuclear region. The protein resides in the cytoskeleton. Its subcellular location is the microtubule organizing center. It is found in the centrosome. The protein localises to the centriole. It localises to the spindle. The protein resides in the midbody. Its subcellular location is the chromosome. It is found in the perikaryon. The protein localises to the cell projection. It localises to the growth cone. The protein resides in the myelin membrane. It catalyses the reaction N(6)-acetyl-L-lysyl-[protein] + NAD(+) + H2O = 2''-O-acetyl-ADP-D-ribose + nicotinamide + L-lysyl-[protein]. It carries out the reaction N(6)-tetradecanoyl-L-lysyl-[protein] + NAD(+) + H2O = 2''-O-tetradecanoyl-ADP-D-ribose + nicotinamide + L-lysyl-[protein]. The catalysed reaction is N(6)-hexadecanoyl-L-lysyl-[protein] + NAD(+) + H2O = 2''-O-hexadecanoyl-ADP-D-ribose + nicotinamide + L-lysyl-[protein]. Inhibited by Sirtinol, A3 and M15 small molecules. Inhibited by nicotinamide. Inhibited by a macrocyclic peptide inhibitor S2iL5. Inhibited by EP300-induced acetylation. Functionally, NAD-dependent protein deacetylase, which deacetylates internal lysines on histone and alpha-tubulin as well as many other proteins such as key transcription factors. Participates in the modulation of multiple and diverse biological processes such as cell cycle control, genomic integrity, microtubule dynamics, cell differentiation, metabolic networks, and autophagy. Plays a major role in the control of cell cycle progression and genomic stability. Functions in the antephase checkpoint preventing precocious mitotic entry in response to microtubule stress agents, and hence allowing proper inheritance of chromosomes. Positively regulates the anaphase promoting complex/cyclosome (APC/C) ubiquitin ligase complex activity by deacetylating CDC20 and FZR1, then allowing progression through mitosis. Associates both with chromatin at transcriptional start sites (TSSs) and enhancers of active genes. Plays a role in cell cycle and chromatin compaction through epigenetic modulation of the regulation of histone H4 'Lys-20' methylation (H4K20me1) during early mitosis. Specifically deacetylates histone H4 at 'Lys-16' (H4K16ac) between the G2/M transition and metaphase enabling H4K20me1 deposition by KMT5A leading to ulterior levels of H4K20me2 and H4K20me3 deposition throughout cell cycle, and mitotic S-phase progression. Deacetylates KMT5A modulating KMT5A chromatin localization during the mitotic stress response. Also deacetylates histone H3 at 'Lys-57' (H3K56ac) during the mitotic G2/M transition. During oocyte meiosis progression, may deacetylate histone H4 at 'Lys-16' (H4K16ac) and alpha-tubulin, regulating spindle assembly and chromosome alignment by influencing microtubule dynamics and kinetochore function. Deacetylates histone H4 at 'Lys-16' (H4K16ac) at the VEGFA promoter and thereby contributes to regulate expression of VEGFA, a key regulator of angiogenesis. Deacetylates alpha-tubulin at 'Lys-40' and hence controls neuronal motility, oligodendroglial cell arbor projection processes and proliferation of non-neuronal cells. Phosphorylation at Ser-368 by a G1/S-specific cyclin E-CDK2 complex inactivates SIRT2-mediated alpha-tubulin deacetylation, negatively regulating cell adhesion, cell migration and neurite outgrowth during neuronal differentiation. Deacetylates PARD3 and participates in the regulation of Schwann cell peripheral myelination formation during early postnatal development and during postinjury remyelination. Involved in several cellular metabolic pathways. Plays a role in the regulation of blood glucose homeostasis by deacetylating and stabilizing phosphoenolpyruvate carboxykinase PCK1 activity in response to low nutrient availability. Acts as a key regulator in the pentose phosphate pathway (PPP) by deacetylating and activating the glucose-6-phosphate G6PD enzyme, and therefore, stimulates the production of cytosolic NADPH to counteract oxidative damage. Maintains energy homeostasis in response to nutrient deprivation as well as energy expenditure by inhibiting adipogenesis and promoting lipolysis. Attenuates adipocyte differentiation by deacetylating and promoting FOXO1 interaction to PPARG and subsequent repression of PPARG-dependent transcriptional activity. Plays a role in the regulation of lysosome-mediated degradation of protein aggregates by autophagy in neuronal cells. Deacetylates FOXO1 in response to oxidative stress or serum deprivation, thereby negatively regulating FOXO1-mediated autophagy. Deacetylates a broad range of transcription factors and co-regulators regulating target gene expression. Deacetylates transcriptional factor FOXO3 stimulating the ubiquitin ligase SCF(SKP2)-mediated FOXO3 ubiquitination and degradation. Deacetylates HIF1A and therefore promotes HIF1A degradation and inhibition of HIF1A transcriptional activity in tumor cells in response to hypoxia. Deacetylates RELA in the cytoplasm inhibiting NF-kappaB-dependent transcription activation upon TNF-alpha stimulation. Inhibits transcriptional activation by deacetylating p53/TP53 and EP300. Also deacetylates EIF5A. Functions as a negative regulator on oxidative stress-tolerance in response to anoxia-reoxygenation conditions. Plays a role as tumor suppressor. In addition to protein deacetylase activity, also has activity toward long-chain fatty acyl groups and mediates protein-lysine demyristoylation and depalmitoylation of target proteins, such as ARF6 and KRAS, thereby regulating their association with membranes. This chain is NAD-dependent protein deacetylase sirtuin-2 (SIRT2), found in Pongo abelii (Sumatran orangutan).